Reading from the N-terminus, the 171-residue chain is Myelin basic protein (171 aa).

N-acetylalanine is present on Ala-1. Phosphoserine occurs at positions 7 and 12. Phosphotyrosine is present on Tyr-14. Residue Thr-17 is modified to Phosphothreonine. Ser-19 carries the post-translational modification Phosphoserine. Thr-20 bears the Phosphothreonine mark. Citrulline is present on residues Arg-25 and Arg-31. Thr-35 is subject to Phosphothreonine. Ser-40 bears the Phosphoserine mark. 2 positions are modified to omega-N-methylarginine: Arg-43 and Arg-49. The tract at residues 44–115 is disordered; it reads FFGGDRGAPK…GRGLSLSRFS (72 aa). A Phosphoserine modification is found at Ser-56. A Phosphotyrosine modification is found at Tyr-69. Ser-76 carries the phosphoserine modification. Phosphothreonine is present on residues Thr-80, Thr-95, and Thr-98. Gln-103 is subject to Deamidated glutamine. Arg-107 is modified (omega-N-methylarginine; alternate). At Arg-107 the chain carries Symmetric dimethylarginine; alternate. Position 115 is a phosphoserine (Ser-115). Residues Arg-122 and Arg-130 each carry the citrulline modification. Residue Gln-148 is modified to Deamidated glutamine. The residue at position 160 (Arg-160) is a Citrulline. Ser-162 is subject to Phosphoserine. The residue at position 166 (Ser-166) is a Phosphoserine; by UHMK1. Arg-171 bears the Citrulline mark.

Belongs to the myelin basic protein family. Homodimer. In terms of processing, as in other animals, several charge isomers may be produced as a result of optional post-translational modifications, such as phosphorylation of serine or threonine residues, deamidation of glutamine or asparagine residues, citrullination and methylation of arginine residues. Phosphorylated by TAOK2, VRK2, MAPK11, MAPK12, MAPK14 and MINK1. Post-translationally, proteolytically cleaved in B cell lysosomes by cathepsin CTSG which degrades the major immunogenic MBP epitope and prevents the activation of MBP-specific autoreactive T cells.

The protein localises to the myelin membrane. Is, with PLP, the most abundant protein component of the myelin membrane in the CNS. Has a role in both the formation and stabilization of this compact multilayer arrangement of bilayers. Each splice variant and charge isomer may have a specialized function in the assembly of an optimized, biochemically functional myelin membrane. The sequence is that of Myelin basic protein (MBP) from Pan troglodytes (Chimpanzee).